We begin with the raw amino-acid sequence, 367 residues long: Molybdopterin synthase catalytic subunit (367 aa).

Substrate is bound by residues 101–102, K117, and 124–126; these read HR and KKE. A disordered region spans residues 326 to 345; sequence HFTKREPSSMEAAPPKKIRK.

This sequence belongs to the MoaE family. MOCS2B subfamily. In terms of assembly, heterotetramer; composed of 2 small (Mocs2A) and 2 large (Mocs2B) subunits.

The protein localises to the cytoplasm. It carries out the reaction 2 [molybdopterin-synthase sulfur-carrier protein]-C-terminal-Gly-aminoethanethioate + cyclic pyranopterin phosphate + H2O = molybdopterin + 2 [molybdopterin-synthase sulfur-carrier protein]-C-terminal Gly-Gly + 2 H(+). It functions in the pathway cofactor biosynthesis; molybdopterin biosynthesis. Functionally, catalytic subunit of the molybdopterin synthase complex, a complex that catalyzes the conversion of precursor Z into molybdopterin. Acts by mediating the incorporation of 2 sulfur atoms from thiocarboxylated Mocs2A into precursor Z to generate a dithiolene group. This chain is Molybdopterin synthase catalytic subunit, found in Drosophila sechellia (Fruit fly).